We begin with the raw amino-acid sequence, 327 residues long: Regulatory protein MsrR (327 aa).

Positions 1-18 (MDKETNDNEYRRQSEHRT) are enriched in basic and acidic residues. Residues 1–24 (MDKETNDNEYRRQSEHRTSAPKRK) form a disordered region. Residues 1-31 (MDKETNDNEYRRQSEHRTSAPKRKKKKKIRK) lie on the Cytoplasmic side of the membrane. Residues 32–52 (LPIILLIVVILLIALVVYIVH) traverse the membrane as a helical; Signal-anchor for type II membrane protein segment. The Extracellular segment spans residues 53 to 327 (SYNSGVEYAK…QAIKDFLDED (275 aa)).

Belongs to the LytR/CpsA/Psr (LCP) family.

Its subcellular location is the cell membrane. Its function is as follows. Involved in SarA attenuation. Affects resistance to oxacillin and teicoplanin, as well as the synthesis of virulence factors. This Staphylococcus aureus (strain Mu50 / ATCC 700699) protein is Regulatory protein MsrR (msrR).